The primary structure comprises 1133 residues: Early transcription factor large subunit homolog (1133 aa).

One can recognise a Helicase ATP-binding domain in the interval 52 to 352 (KGGRAFFPCD…PNGQPLQRQQ (301 aa)). 99–106 (WQTGTGKS) is an ATP binding site. Positions 281–284 (DEIH) match the DEAH box motif. Positions 524–724 (MMKDILSIIR…EGDKALRKHA (201 aa)) constitute a Helicase C-terminal domain.

It belongs to the DEAD box helicase family. DEAH subfamily.

Its subcellular location is the virion. It carries out the reaction ATP + H2O = ADP + phosphate + H(+). Functionally, putative initation factor. This is Early transcription factor large subunit homolog from Ornithodoros (relapsing fever ticks).